The sequence spans 35 residues: Conotoxin Cl6.16 (35 aa).

3 disulfides stabilise this stretch: cysteine 10–cysteine 22, cysteine 16–cysteine 27, and cysteine 21–cysteine 34.

Expressed by the venom duct.

The protein localises to the secreted. This chain is Conotoxin Cl6.16, found in Californiconus californicus (California cone).